The sequence spans 279 residues: Thymidylate synthase (279 aa).

133–134 (RR) is a dUMP binding site. The active-site Nucleophile is Cys-154. DUMP-binding positions include 178 to 181 (RSND), Asn-189, and 219 to 221 (HIY). Asp-181 serves as a coordination point for (6R)-5,10-methylene-5,6,7,8-tetrahydrofolate. Ala-278 is a binding site for (6R)-5,10-methylene-5,6,7,8-tetrahydrofolate.

This sequence belongs to the thymidylate synthase family. Bacterial-type ThyA subfamily. Homodimer.

It localises to the cytoplasm. The catalysed reaction is dUMP + (6R)-5,10-methylene-5,6,7,8-tetrahydrofolate = 7,8-dihydrofolate + dTMP. It functions in the pathway pyrimidine metabolism; dTTP biosynthesis. Catalyzes the reductive methylation of 2'-deoxyuridine-5'-monophosphate (dUMP) to 2'-deoxythymidine-5'-monophosphate (dTMP) while utilizing 5,10-methylenetetrahydrofolate (mTHF) as the methyl donor and reductant in the reaction, yielding dihydrofolate (DHF) as a by-product. This enzymatic reaction provides an intracellular de novo source of dTMP, an essential precursor for DNA biosynthesis. The sequence is that of Thymidylate synthase from Streptococcus pneumoniae (strain ATCC 700669 / Spain 23F-1).